Consider the following 85-residue polypeptide: U4-theraphotoxin-Hhn1ab (85 aa).

A signal peptide spans 1–22 (MKVTLIAILTCAAVLVLHTTAA). The propeptide occupies 23–48 (EELEAESQLMEVGMPDTELAAVDEER). Intrachain disulfides connect Cys-56-Cys-77 and Cys-71-Cys-82.

It belongs to the neurotoxin 12 (Hwtx-2) family. 02 (Hwtx-2) subfamily. As to expression, expressed by the venom gland.

Its subcellular location is the secreted. Postsynaptic neurotoxin. The sequence is that of U4-theraphotoxin-Hhn1ab from Cyriopagopus hainanus (Chinese bird spider).